Here is a 692-residue protein sequence, read N- to C-terminus: MAREFSLENTRNIGIMAHIDAGKTTATERILYYTGRIHKIGETHEGASQMDWMEQEQERGITITSAATTAQWKGHRVNIIDTPGHVDFTVEVERSLRVLDGAVAVLDAQSGVEPQTETVWRQATTYGVPRIVFVNKMDKIGADFLYSVGTIHDRLQANAHPIQLPIGAEDEFNGIIDLVEECAYMYGNDLGTDIQRVEIPEEHKELAEEYRGKLIEAVAELDEEMMMKYLEGEEITVEELKAGIRKATTSVEFFPVICGSAFKNKGVQILLDAVIDYLPSPLDVPAIKGIVPDTDEEVERKSSDEEPFAALAFKIMTDPYVGKLTFFRVYSGVLNSGSYVKNSTKGKRERVGRILQMHANSREEISTVYAGDIAAAVGLKDTTTGDTLCDEKSLVILESMEFPEPVISVAIEPKSKADQDKMGTALSKLSEEDPTFRAHTDQETGQTIIAGMGELHLDIIVDRMRREFKVEANVGAPQVAYRETFRAAAKVEGKFARQSGGRGQFGHVWIEFEPNEEGKGFEFENKIVGGVVPREYIPAVGAGLEDALKNGVLAGYPVVDIKAALVDGSYHDVDSSEMAFKIAASMALKAAVSKCNPVILEPMMKVEVVIPEEYMGDIMGDVTSRRGRVEGMEARGNAQVVRAMVPLSEMFGYATSLRSNTQGRGTFSMVFDHYEEVPKSVSEEIIKKNKGE.

Residues 8 to 282 (ENTRNIGIMA…AVIDYLPSPL (275 aa)) form the tr-type G domain. GTP is bound by residues 17 to 24 (AHIDAGKT), 81 to 85 (DTPGH), and 135 to 138 (NKMD).

This sequence belongs to the TRAFAC class translation factor GTPase superfamily. Classic translation factor GTPase family. EF-G/EF-2 subfamily.

It localises to the cytoplasm. Catalyzes the GTP-dependent ribosomal translocation step during translation elongation. During this step, the ribosome changes from the pre-translocational (PRE) to the post-translocational (POST) state as the newly formed A-site-bound peptidyl-tRNA and P-site-bound deacylated tRNA move to the P and E sites, respectively. Catalyzes the coordinated movement of the two tRNA molecules, the mRNA and conformational changes in the ribosome. The sequence is that of Elongation factor G from Bacillus thuringiensis subsp. konkukian (strain 97-27).